Consider the following 705-residue polypeptide: Phosphatidylinositol 4-phosphate 5-kinase 3 (705 aa).

MORN repeat units lie at residues 58–80 (YNGG…DGCM), 81–103 (YEGE…SGAT), 104–126 (YEGQ…DGDT), 127–149 (YRGH…NGDG), 150–172 (YQGN…DGNE), 173–195 (YVGE…NGNR), and 196–218 (YDGL…EEKT). One can recognise a PIPK domain in the interval 321-701 (TVTAGHKNYD…RFRDFINKIF (381 aa)). The activation loop stretch occupies residues 661–682 (YDITKKLEHAYKSLHADPASIS).

The protein localises to the cell membrane. It catalyses the reaction a 1,2-diacyl-sn-glycero-3-phospho-(1D-myo-inositol 4-phosphate) + ATP = a 1,2-diacyl-sn-glycero-3-phospho-(1D-myo-inositol-4,5-bisphosphate) + ADP + H(+). Its function is as follows. With DRP1A and DRP2B, required for the precise coordination of polar ARAC3/ROP6 and ARAC4/ROP2 placement and subsequent root hair positioning during planar polarity formation in root hair-forming cells, probably by mediating the correct basal-to-planar polarity switching of D6PK into the polar, lipid-enriched domain. The chain is Phosphatidylinositol 4-phosphate 5-kinase 3 from Arabidopsis thaliana (Mouse-ear cress).